The chain runs to 930 residues: G patch domain-containing protein 1 (930 aa).

The segment covering 1–12 (MAALDSDSDEDL) has biased composition (acidic residues). Disordered regions lie at residues 1–41 (MAAL…TVRD) and 170–209 (GVGP…EDDD). The residue at position 2 (Ala2) is an N-acetylalanine. Residues Ser6 and Ser8 each carry the phosphoserine modification. Residues 152-198 (KLSVGFELLRKMGWKEGQGVGPRVKRKARRQKPDPGVKIYGCALPPG) form the G-patch domain. A Glycyl lysine isopeptide (Lys-Gly) (interchain with G-Cter in SUMO2) cross-link involves residue Lys313. At Ser358 the chain carries Phosphoserine. Disordered regions lie at residues 400–420 (GKAG…SKRG), 465–486 (SLAQ…GHSS), 566–596 (SSRF…DKQS), and 654–930 (PEPA…LRRQ). Over residues 465-478 (SLAQSASSSRAQAS) the composition is skewed to low complexity. Basic and acidic residues-rich tracts occupy residues 582-593 (EVPRDQENDVSD) and 674-695 (GSDK…KEDS). A Phosphoserine modification is found at Ser715. A compositionally biased stretch (basic and acidic residues) spans 719 to 737 (SKEEQAPEPRPDTTVDKAV). Acidic residues predominate over residues 768-777 (SEEEQDDSED). Over residues 851–886 (KPKKSKERHKSKKEHRRKREKKKKHKKHKHKSKQKN) the composition is skewed to basic residues. Residues 894–903 (SSESTDSSDS) show a composition bias toward low complexity. Over residues 921 to 930 (RLKCLPLRRQ) the composition is skewed to basic residues.

This sequence belongs to the GPATCH1 family.

This chain is G patch domain-containing protein 1 (Gpatch1), found in Mus musculus (Mouse).